A 299-amino-acid chain; its full sequence is AUGMIN subunit 1 (299 aa).

Ser-2 carries the N-acetylserine modification. 2 coiled-coil regions span residues 76–96 and 164–184; these read RLKA…LESA and RKAI…EDDV.

It belongs to the HAUS1 family. Part of the augmin complex composed of 8 subunits. The complex acts on microtubules and interacts with gamma-tubulin in spindles and the phragmoplast. Interacts with AUG3.

It is found in the cytoplasm. It localises to the cytoskeleton. The protein localises to the spindle. The protein resides in the phragmoplast. Functionally, involved in microtubules reorganization during spindle and phragmoplast development. The polypeptide is AUGMIN subunit 1 (Arabidopsis thaliana (Mouse-ear cress)).